The chain runs to 224 residues: Protein GrpE (224 aa).

Composition is skewed to polar residues over residues 1–16 (MSGD…NVES) and 209–224 (ESSS…EGDA). Disordered regions lie at residues 1–35 (MSGD…DPVV) and 203–224 (SMGP…EGDA).

It belongs to the GrpE family. As to quaternary structure, homodimer.

The protein localises to the cytoplasm. Its function is as follows. Participates actively in the response to hyperosmotic and heat shock by preventing the aggregation of stress-denatured proteins, in association with DnaK and GrpE. It is the nucleotide exchange factor for DnaK and may function as a thermosensor. Unfolded proteins bind initially to DnaJ; upon interaction with the DnaJ-bound protein, DnaK hydrolyzes its bound ATP, resulting in the formation of a stable complex. GrpE releases ADP from DnaK; ATP binding to DnaK triggers the release of the substrate protein, thus completing the reaction cycle. Several rounds of ATP-dependent interactions between DnaJ, DnaK and GrpE are required for fully efficient folding. The protein is Protein GrpE of Synechococcus sp. (strain CC9902).